Consider the following 344-residue polypeptide: Anthranilate phosphoribosyltransferase (344 aa).

5-phospho-alpha-D-ribose 1-diphosphate-binding positions include Gly-85, 88 to 89 (GD), Thr-93, 95 to 98 (NIST), 113 to 121 (KHGGRSVSS), and Ser-125. Residue Gly-85 participates in anthranilate binding. Ser-97 lines the Mg(2+) pocket. An anthranilate-binding site is contributed by Arg-171. Positions 230 and 231 each coordinate Mg(2+).

The protein belongs to the anthranilate phosphoribosyltransferase family. As to quaternary structure, homodimer. Requires Mg(2+) as cofactor.

It carries out the reaction N-(5-phospho-beta-D-ribosyl)anthranilate + diphosphate = 5-phospho-alpha-D-ribose 1-diphosphate + anthranilate. It participates in amino-acid biosynthesis; L-tryptophan biosynthesis; L-tryptophan from chorismate: step 2/5. Functionally, catalyzes the transfer of the phosphoribosyl group of 5-phosphorylribose-1-pyrophosphate (PRPP) to anthranilate to yield N-(5'-phosphoribosyl)-anthranilate (PRA). In Acidovorax ebreus (strain TPSY) (Diaphorobacter sp. (strain TPSY)), this protein is Anthranilate phosphoribosyltransferase.